A 284-amino-acid chain; its full sequence is Diaminopimelate epimerase (284 aa).

Residues Asn13 and Asn66 each contribute to the substrate site. The Proton donor role is filled by Cys75. Substrate is bound by residues 76-77 (GN), Asn166, Asn199, and 217-218 (ER). The Proton acceptor role is filled by Cys226. Substrate is bound at residue 227-228 (GT).

Belongs to the diaminopimelate epimerase family. In terms of assembly, homodimer.

The protein localises to the cytoplasm. It carries out the reaction (2S,6S)-2,6-diaminopimelate = meso-2,6-diaminopimelate. The protein operates within amino-acid biosynthesis; L-lysine biosynthesis via DAP pathway; DL-2,6-diaminopimelate from LL-2,6-diaminopimelate: step 1/1. Its function is as follows. Catalyzes the stereoinversion of LL-2,6-diaminopimelate (L,L-DAP) to meso-diaminopimelate (meso-DAP), a precursor of L-lysine and an essential component of the bacterial peptidoglycan. The chain is Diaminopimelate epimerase from Halothermothrix orenii (strain H 168 / OCM 544 / DSM 9562).